The sequence spans 251 residues: Pyrroloquinoline-quinone synthase (251 aa).

This sequence belongs to the PqqC family.

The enzyme catalyses 6-(2-amino-2-carboxyethyl)-7,8-dioxo-1,2,3,4,7,8-hexahydroquinoline-2,4-dicarboxylate + 3 O2 = pyrroloquinoline quinone + 2 H2O2 + 2 H2O + H(+). It participates in cofactor biosynthesis; pyrroloquinoline quinone biosynthesis. Its function is as follows. Ring cyclization and eight-electron oxidation of 3a-(2-amino-2-carboxyethyl)-4,5-dioxo-4,5,6,7,8,9-hexahydroquinoline-7,9-dicarboxylic-acid to PQQ. The polypeptide is Pyrroloquinoline-quinone synthase (Klebsiella pneumoniae subsp. pneumoniae (strain ATCC 700721 / MGH 78578)).